The following is a 218-amino-acid chain: Small ribosomal subunit protein uS3 (218 aa).

The 69-residue stretch at Leu-38–Lys-106 folds into the KH type-2 domain.

The protein belongs to the universal ribosomal protein uS3 family. In terms of assembly, part of the 30S ribosomal subunit. Forms a tight complex with proteins S10 and S14.

Functionally, binds the lower part of the 30S subunit head. Binds mRNA in the 70S ribosome, positioning it for translation. This is Small ribosomal subunit protein uS3 from Legionella pneumophila (strain Paris).